Here is a 38-residue protein sequence, read N- to C-terminus: Alpha-conotoxin LvIC (38 aa).

The propeptide occupies 1–21; sequence SNGRNAAAGDKPSYWITLAIT. Disulfide bonds link C23/C29 and C24/C34. A Glutamine amide modification is found at Q35.

Belongs to the conotoxin A superfamily. In terms of processing, the two analogs ([DelQ14]LvIC and [D1G,DelQ14]LvIC) are amidated at their N-terminal Cys. Expressed by the venom gland.

The protein resides in the secreted. Functionally, alpha-conotoxins bind to the nicotinic acetylcholine receptors (nAChR) and inhibit them. This synthetic peptide inhibits rat alpha-6/alpha-3-beta-4 nAChR (IC(50)=3.3 uM). This Conus lividus (Livid cone) protein is Alpha-conotoxin LvIC.